A 666-amino-acid polypeptide reads, in one-letter code: Probable potassium transport system protein Kup (666 aa).

The next 12 helical transmembrane spans lie at 16 to 36 (GFII…LYTM), 58 to 78 (ISLI…LIAL), 98 to 118 (ISPW…SDGA), 141 to 161 (IYQN…VLFG), 165 to 185 (FGTG…FSFL), 221 to 241 (IFIL…YSDL), 253 to 273 (WPFV…WILA), 299 to 319 (LATL…FTLI), 343 to 363 (LYIP…VLAF), 373 to 393 (YGLA…YYLI), 399 to 419 (PILA…FFLA), and 424 to 444 (FMHG…VMFI).

It belongs to the HAK/KUP transporter (TC 2.A.72) family.

The protein resides in the cell membrane. It carries out the reaction K(+)(in) + H(+)(in) = K(+)(out) + H(+)(out). Transport of potassium into the cell. Likely operates as a K(+):H(+) symporter. This Streptococcus pyogenes serotype M28 (strain MGAS6180) protein is Probable potassium transport system protein Kup.